Reading from the N-terminus, the 704-residue chain is Elongation factor G (704 aa).

Positions 8-290 (ARYRNIGISA…AVIDYLPSPV (283 aa)) constitute a tr-type G domain. Residues 17–24 (AHIDAGKT), 88–92 (DTPGH), and 142–145 (NKMD) contribute to the GTP site. 2 positions are modified to N6-acetyllysine: Lys-504 and Lys-643.

It belongs to the TRAFAC class translation factor GTPase superfamily. Classic translation factor GTPase family. EF-G/EF-2 subfamily.

The protein resides in the cytoplasm. Its function is as follows. Catalyzes the GTP-dependent ribosomal translocation step during translation elongation. During this step, the ribosome changes from the pre-translocational (PRE) to the post-translocational (POST) state as the newly formed A-site-bound peptidyl-tRNA and P-site-bound deacylated tRNA move to the P and E sites, respectively. Catalyzes the coordinated movement of the two tRNA molecules, the mRNA and conformational changes in the ribosome. This Shigella sonnei (strain Ss046) protein is Elongation factor G.